The sequence spans 140 residues: MAVQRTFSILKPDATERNITGAINALIEKAGLRIVAQKRIHMTRGQAETFYAVHKERPFFGELVDFMTSGPVVVQVLEGEGAIAKYRDVMGATDPSKAADGTIRKLHAKSIGENSVHGSDAPETAAIEIAQFFAGNEIVG.

Residues K11, F59, R87, T93, R104, and N114 each contribute to the ATP site. Residue H117 is the Pros-phosphohistidine intermediate of the active site.

The protein belongs to the NDK family. In terms of assembly, homotetramer. Mg(2+) is required as a cofactor.

The protein resides in the cytoplasm. It carries out the reaction a 2'-deoxyribonucleoside 5'-diphosphate + ATP = a 2'-deoxyribonucleoside 5'-triphosphate + ADP. It catalyses the reaction a ribonucleoside 5'-diphosphate + ATP = a ribonucleoside 5'-triphosphate + ADP. Functionally, major role in the synthesis of nucleoside triphosphates other than ATP. The ATP gamma phosphate is transferred to the NDP beta phosphate via a ping-pong mechanism, using a phosphorylated active-site intermediate. The chain is Nucleoside diphosphate kinase from Rhodopseudomonas palustris (strain HaA2).